Reading from the N-terminus, the 35-residue chain is Jingzhaotoxin F5-21.66 (35 aa).

Intrachain disulfides connect C2-C16, C9-C21, and C15-C29.

Belongs to the neurotoxin 10 (Hwtx-1) family. 48 (Jztx-F5) subfamily. Expressed by the venom gland.

It is found in the secreted. Probable ion channel inhibitor. The chain is Jingzhaotoxin F5-21.66 from Chilobrachys guangxiensis (Chinese earth tiger tarantula).